Here is a 254-residue protein sequence, read N- to C-terminus: Imidazole glycerol phosphate synthase subunit HisF (254 aa).

Catalysis depends on residues D11 and D130.

It belongs to the HisA/HisF family. As to quaternary structure, heterodimer of HisH and HisF.

It localises to the cytoplasm. The enzyme catalyses 5-[(5-phospho-1-deoxy-D-ribulos-1-ylimino)methylamino]-1-(5-phospho-beta-D-ribosyl)imidazole-4-carboxamide + L-glutamine = D-erythro-1-(imidazol-4-yl)glycerol 3-phosphate + 5-amino-1-(5-phospho-beta-D-ribosyl)imidazole-4-carboxamide + L-glutamate + H(+). It functions in the pathway amino-acid biosynthesis; L-histidine biosynthesis; L-histidine from 5-phospho-alpha-D-ribose 1-diphosphate: step 5/9. In terms of biological role, IGPS catalyzes the conversion of PRFAR and glutamine to IGP, AICAR and glutamate. The HisF subunit catalyzes the cyclization activity that produces IGP and AICAR from PRFAR using the ammonia provided by the HisH subunit. The chain is Imidazole glycerol phosphate synthase subunit HisF from Trichlorobacter lovleyi (strain ATCC BAA-1151 / DSM 17278 / SZ) (Geobacter lovleyi).